The following is a 488-amino-acid chain: Solanidine UDP-glucose glucosyltransferase 1 (488 aa).

The Proton acceptor role is filled by His23. An anthocyanidin is bound at residue His23. The active-site Charge relay is the Asp127. 6 residues coordinate UDP-alpha-D-glucose: Val352, Gln354, His369, Asn373, Ser374, and Glu377. Ala392 provides a ligand contact to an anthocyanidin. Asp393 and Gln394 together coordinate UDP-alpha-D-glucose.

This sequence belongs to the UDP-glycosyltransferase family. In terms of tissue distribution, expressed in the shoot apical meristem (SAM) and tuber.

It catalyses the reaction solasodine + UDP-alpha-D-glucose = solasodine 3-beta-D-glucoside + UDP + H(+). It carries out the reaction solanidine + UDP-alpha-D-glucose = solanidine 3-O-beta-D-glucopyranoside + UDP + H(+). The catalysed reaction is tomatidine + UDP-alpha-D-glucose = tomatidine 3-O-beta-D-glucopyranoside + UDP + H(+). Glucosyltransferase involved in the glucosylation of the steroidal alkaloid aglycons solanidine, solasodine and tomatidine to produce their corresponding glycoalkaloids. In Solanum tuberosum (Potato), this protein is Solanidine UDP-glucose glucosyltransferase 1.